Here is a 109-residue protein sequence, read N- to C-terminus: Nucleoid-associated protein YbaB (109 aa).

The protein belongs to the YbaB/EbfC family. As to quaternary structure, homodimer.

It localises to the cytoplasm. Its subcellular location is the nucleoid. Functionally, binds to DNA and alters its conformation. May be involved in regulation of gene expression, nucleoid organization and DNA protection. The chain is Nucleoid-associated protein YbaB from Escherichia coli O127:H6 (strain E2348/69 / EPEC).